The primary structure comprises 342 residues: Probable alcohol acetyltransferase (342 aa).

The N-terminal 38 residues, 1 to 38, are a transit peptide targeting the mitochondrion; it reads MMILGKAGILAQYGTIYVRQNTIRNNLSSCIFKQSLCA. The propeptide at 39–46 is removed in mature form; that stretch reads FHSLAKVL. Residues 75-326 form the AB hydrolase-1 domain; sequence PPIIILHGLF…AGHWVNAEKP (252 aa). Catalysis depends on charge relay system residues Ser-152 and His-319.

It belongs to the AB hydrolase superfamily. In terms of processing, processed by both the mitochondrial processing peptidase (MPP) and the mitochondrial octapeptidyl aminopeptidase (OCT1).

The protein localises to the mitochondrion. Probable alcohol acetyltransferase that uses acetyl-CoA to synthesize acetate esters from various alcohols. Not involved in the synthesis of ethyl acetate. The chain is Probable alcohol acetyltransferase (IMO32) from Saccharomyces cerevisiae (strain ATCC 204508 / S288c) (Baker's yeast).